The chain runs to 155 residues: Small ribosomal subunit protein uS7c (155 aa).

The protein belongs to the universal ribosomal protein uS7 family. In terms of assembly, part of the 30S ribosomal subunit.

It is found in the plastid. Its subcellular location is the chloroplast. Its function is as follows. One of the primary rRNA binding proteins, it binds directly to 16S rRNA where it nucleates assembly of the head domain of the 30S subunit. The protein is Small ribosomal subunit protein uS7c (rps7) of Euonymus alatus (Burning bush).